The sequence spans 315 residues: HTH-type transcriptional regulator TreR (315 aa).

One can recognise an HTH lacI-type domain in the interval 5–59; it reads LTIKDIARLSGVGKSTVSRVLNNESGVSERTRERVEAVMNQHGFSPSRSARAMRG. The segment at residues 7-26 is a DNA-binding region (H-T-H motif); that stretch reads IKDIARLSGVGKSTVSRVLN. Alpha,alpha-trehalose 6-phosphate-binding positions include 71 to 77, Gly-126, Arg-147, 187 to 190, Arg-194, Thr-242, and Tyr-284; these read RLDSLSE and DITT.

Homodimer.

Its function is as follows. Repressor of the treBC operon. It is able to bind trehalose-6-phosphate. This is HTH-type transcriptional regulator TreR (treR) from Salmonella typhimurium (strain LT2 / SGSC1412 / ATCC 700720).